The sequence spans 436 residues: UDP-N-acetylmuramate--L-alanine ligase (436 aa).

111 to 117 (GTHGKTS) is a binding site for ATP.

Belongs to the MurCDEF family.

It is found in the cytoplasm. The catalysed reaction is UDP-N-acetyl-alpha-D-muramate + L-alanine + ATP = UDP-N-acetyl-alpha-D-muramoyl-L-alanine + ADP + phosphate + H(+). It participates in cell wall biogenesis; peptidoglycan biosynthesis. Its function is as follows. Cell wall formation. The polypeptide is UDP-N-acetylmuramate--L-alanine ligase (Lactiplantibacillus plantarum (strain ATCC BAA-793 / NCIMB 8826 / WCFS1) (Lactobacillus plantarum)).